Here is a 241-residue protein sequence, read N- to C-terminus: tRNA (guanine-N(1)-)-methyltransferase (241 aa).

S-adenosyl-L-methionine is bound by residues Gly108 and 127-132 (LGDYVL).

This sequence belongs to the RNA methyltransferase TrmD family. In terms of assembly, homodimer.

The protein resides in the cytoplasm. It carries out the reaction guanosine(37) in tRNA + S-adenosyl-L-methionine = N(1)-methylguanosine(37) in tRNA + S-adenosyl-L-homocysteine + H(+). In terms of biological role, specifically methylates guanosine-37 in various tRNAs. The polypeptide is tRNA (guanine-N(1)-)-methyltransferase (Streptococcus suis (strain 98HAH33)).